Here is a 444-residue protein sequence, read N- to C-terminus: Glutamyl-tRNA reductase (444 aa).

Substrate contacts are provided by residues 49–52, Ser109, 114–116, and Gln120; these read TCNR and ETQ. The active-site Nucleophile is the Cys50. Residue 189–194 coordinates NADP(+); sequence GAGKMG.

This sequence belongs to the glutamyl-tRNA reductase family. In terms of assembly, homodimer.

It carries out the reaction (S)-4-amino-5-oxopentanoate + tRNA(Glu) + NADP(+) = L-glutamyl-tRNA(Glu) + NADPH + H(+). It functions in the pathway porphyrin-containing compound metabolism; protoporphyrin-IX biosynthesis; 5-aminolevulinate from L-glutamyl-tRNA(Glu): step 1/2. In terms of biological role, catalyzes the NADPH-dependent reduction of glutamyl-tRNA(Glu) to glutamate 1-semialdehyde (GSA). In Bacillus cereus (strain G9842), this protein is Glutamyl-tRNA reductase.